The following is a 185-amino-acid chain: Acireductone dioxygenase (185 aa).

Residues His-96, His-98, Glu-102, and His-140 each contribute to the Fe(2+) site. 4 residues coordinate Ni(2+): His-96, His-98, Glu-102, and His-140.

The protein belongs to the acireductone dioxygenase (ARD) family. Monomer. The cofactor is Fe(2+). Requires Ni(2+) as cofactor.

The catalysed reaction is 1,2-dihydroxy-5-(methylsulfanyl)pent-1-en-3-one + O2 = 3-(methylsulfanyl)propanoate + CO + formate + 2 H(+). It catalyses the reaction 1,2-dihydroxy-5-(methylsulfanyl)pent-1-en-3-one + O2 = 4-methylsulfanyl-2-oxobutanoate + formate + 2 H(+). The protein operates within amino-acid biosynthesis; L-methionine biosynthesis via salvage pathway; L-methionine from S-methyl-5-thio-alpha-D-ribose 1-phosphate: step 5/6. Its function is as follows. Catalyzes 2 different reactions between oxygen and the acireductone 1,2-dihydroxy-3-keto-5-methylthiopentene (DHK-MTPene) depending upon the metal bound in the active site. Fe-containing acireductone dioxygenase (Fe-ARD) produces formate and 2-keto-4-methylthiobutyrate (KMTB), the alpha-ketoacid precursor of methionine in the methionine recycle pathway. Ni-containing acireductone dioxygenase (Ni-ARD) produces methylthiopropionate, carbon monoxide and formate, and does not lie on the methionine recycle pathway. This is Acireductone dioxygenase from Marinobacter nauticus (strain ATCC 700491 / DSM 11845 / VT8) (Marinobacter aquaeolei).